Consider the following 395-residue polypeptide: L-rhamnonate dehydratase (395 aa).

Substrate contacts are provided by H23 and R49. D215, E241, and E269 together coordinate Mg(2+). H319 serves as the catalytic Proton acceptor. A substrate-binding site is contributed by E339.

This sequence belongs to the mandelate racemase/muconate lactonizing enzyme family. RhamD subfamily. Homooctamer; tetramer of dimers. It depends on Mg(2+) as a cofactor.

It catalyses the reaction L-rhamnonate = 2-dehydro-3-deoxy-L-rhamnonate + H2O. Catalyzes the dehydration of L-rhamnonate to 2-keto-3-deoxy-L-rhamnonate (KDR). This chain is L-rhamnonate dehydratase, found in Delftia acidovorans (strain DSM 14801 / SPH-1).